Consider the following 432-residue polypeptide: uncharacterized protein (432 aa).

2 SIS domains span residues W105–S244 and C277–P422.

This is an uncharacterized protein from Saccharomyces cerevisiae (strain Lalvin EC1118 / Prise de mousse) (Baker's yeast).